The sequence spans 125 residues: Membrane protein BRI3 (125 aa).

2 consecutive transmembrane segments (helical) span residues 67-86 and 92-112; these read YPANSIVVVGGCPVCRVGVL and FLGIFLAIILFPFGFICCFAL.

This sequence belongs to the BRI3 family. As to quaternary structure, interacts with BRI3BP. Interacts with MGAT1 and IFITM3. In terms of assembly, interacts with BRI3BP, MGAT1 and IFITM3; the interactions are weaker than with isoform 1.

Its subcellular location is the lysosome membrane. It is found in the cytoplasm. The protein resides in the perinuclear region. It localises to the nucleus. Participates in tumor necrosis factor-alpha (TNF)-induced cell death. May be a target of Wnt/beta-catenin signaling in the liver. The chain is Membrane protein BRI3 (BRI3) from Homo sapiens (Human).